Reading from the N-terminus, the 1159-residue chain is Protocadherin-17 (1159 aa).

An N-terminal signal peptide occupies residues 1–17; it reads MYLSICCCFLLWAPALT. 6 Cadherin domains span residues 18–132, 133–243, 244–351, 353–472, 473–583, and 589–695; these read LKNL…APSF, SSDQ…SPVF, EAPS…APSI, FVSV…PPRF, TKGL…APVI, and QNDT…VPRV. The Extracellular portion of the chain corresponds to 18 to 707; it reads LKNLNYSVPE…EQHHWDMSLP (690 aa). Asparagine 22 carries N-linked (GlcNAc...) asparagine glycosylation. The short motif at 186–188 is the Cell attachment site element; it reads RGD. 6 N-linked (GlcNAc...) asparagine glycosylation sites follow: asparagine 266, asparagine 439, asparagine 453, asparagine 504, asparagine 566, and asparagine 590. A helical transmembrane segment spans residues 708 to 728; that stretch reads LIVTLSTISIILLAAMITIAV. The Cytoplasmic segment spans residues 729 to 1159; that stretch reads KCKRENKEIR…RGNDPVAVRK (431 aa). Disordered stretches follow at residues 858-909 and 1108-1132; these read NFPA…KGSC and SRDS…GRES. Residues 867 to 879 show a composition bias toward polar residues; it reads GSRQQFVQSSSTF. Composition is skewed to basic and acidic residues over residues 880-895 and 1120-1132; these read KDPE…HGDS and QLDH…GRES.

Its subcellular location is the cell membrane. In terms of biological role, potential calcium-dependent cell-adhesion protein. The chain is Protocadherin-17 (PCDH17) from Homo sapiens (Human).